The primary structure comprises 518 residues: MIYHINMDKHSLIDLYNNEVLTDCQLHLTDSIETIVMNVHKNILYMSCPYFKSMFTNFREQKSSTVKLDVHNARITYDIVKSFYGFPLEEPNWKYQIDTHIVKDFLLLETGLENINLLPIPAEDFDNFIDVVDKIGYNEFCLKKIIDNIPDNYDLSKFPLDLLNGLLAVCFKYDLHISRETGVYIWSFKYNKLVLSYFDSSIIDIEQTFDGGFYFSSSTIIDSNHEESSDDEVNDDEDTDNEDTDDEGYCQISLFKFNISRTNDKYEASILNTGLKIIGPIAYSKHFNQVFIVTDKYNICVYDTDIKNLVNKFVFNDTIEIIAPIKDKMVVVTSIQIIILNLLDGKNLSKIDSNTNIISYNSNLGVFAYINNNTNVCIYSLESLSITTNINHSTTINHILYSPKSKYFIFCDENSIIYVYSTKDNYSLIKTIDFKKFLKFGVKDFEFMTSKIIVAIDIKGKICIWNIETEQIIQNIDCSEDYNNIYNIQKINGPDYSIHKKISKIIQEKTQSKLSISS.

The BTB domain occupies 22–92; the sequence is TDCQLHLTDS…FYGFPLEEPN (71 aa). Residues 224–246 form a disordered region; the sequence is NHEESSDDEVNDDEDTDNEDTDD. Over residues 228-246 the composition is skewed to acidic residues; it reads SSDDEVNDDEDTDNEDTDD. WD repeat units follow at residues 391-430 and 437-475; these read NHST…SLIK and FLKF…IIQN.

This sequence belongs to the mimivirus BTB/WD family.

In Acanthamoeba polyphaga (Amoeba), this protein is Putative BTB/POZ domain and WD-repeat protein R731.